Here is a 343-residue protein sequence, read N- to C-terminus: Protein phosphatase 2C homolog 7, mitochondrial (343 aa).

A mitochondrion-targeting transit peptide spans 1–39; that stretch reads MFANVGFRTLRVSRGPLYGSCSQIISFSKRTFYSSAKSG. The PPM-type phosphatase domain occupies 76–342; it reads IYQKLKDSIR…DDITVVVVRV (267 aa). Residues Asp-109, Gly-110, and Asp-265 each contribute to the Mn(2+) site.

Requires Mg(2+) as cofactor. Mn(2+) serves as cofactor.

It localises to the mitochondrion. It carries out the reaction O-phospho-L-seryl-[protein] + H2O = L-seryl-[protein] + phosphate. The enzyme catalyses O-phospho-L-threonyl-[protein] + H2O = L-threonyl-[protein] + phosphate. Protein phosphatase which positively regulates biosynthesis of the ubiquinone, coenzyme Q. Dephosphorylates and activates the ubiquinone biosynthesis protein CAT5/COQ7. Also dephosphorylates CIT1 on 'Ser-462', which leads to its activation. The sequence is that of Protein phosphatase 2C homolog 7, mitochondrial (PTC7) from Saccharomyces cerevisiae (strain ATCC 204508 / S288c) (Baker's yeast).